The following is a 319-amino-acid chain: R-phycoerythrin gamma chain, chloroplastic (319 aa).

The N-terminal 71 residues, 1-71, are a transit peptide targeting the chloroplast; that stretch reads MDSPAFAVTG…RPKKLASYKR (71 aa). Residues cysteine 96 and cysteine 135 each coordinate phycourobilin. Cysteine 212 lines the (2R,3E)-phycoerythrobilin pocket. Cysteine 299 serves as a coordination point for phycourobilin.

In terms of assembly, heteromer of 4 alpha, 4 beta and one gamma chains. Post-translationally, contains four covalently linked bilin chromophores.

It is found in the plastid. The protein resides in the chloroplast thylakoid membrane. The sequence is that of R-phycoerythrin gamma chain, chloroplastic from Corallina officinalis (Coral seaweed).